A 548-amino-acid chain; its full sequence is Chaperonin GroEL (548 aa).

ATP is bound by residues 30–33 (TLGP), Lys-51, 87–91 (DGTTT), Gly-415, 479–481 (NAA), and Asp-495.

It belongs to the chaperonin (HSP60) family. As to quaternary structure, forms a cylinder of 14 subunits composed of two heptameric rings stacked back-to-back. Interacts with the co-chaperonin GroES.

The protein resides in the cytoplasm. It carries out the reaction ATP + H2O + a folded polypeptide = ADP + phosphate + an unfolded polypeptide.. Its function is as follows. Together with its co-chaperonin GroES, plays an essential role in assisting protein folding. The GroEL-GroES system forms a nano-cage that allows encapsulation of the non-native substrate proteins and provides a physical environment optimized to promote and accelerate protein folding. The polypeptide is Chaperonin GroEL (Pectobacterium carotovorum subsp. carotovorum (strain PC1)).